The sequence spans 648 residues: Activatory protein CHA4 (648 aa).

Residues 1-10 show a composition bias toward pro residues; the sequence is MMLEPSPPPL. A disordered region spans residues 1–37; that stretch reads MMLEPSPPPLTTTVTPSLPSSLKKSVTDNDQNNNNVP. Low complexity predominate over residues 11 to 22; sequence TTTVTPSLPSSL. The segment at residues 44-70 is a DNA-binding region (zn(2)-C6 fungal-type); sequence CQNCRRRRRKCNMEKPCSNCIKFRTEC. The segment at 140 to 177 is disordered; sequence AQSALPSSESNDENESDAFTKKMPSESPPPVGTNSIYP. Phosphoserine occurs at positions 164 and 166.

It localises to the nucleus. In terms of biological role, activates the CHA1 gene for L-serine dehydratase. Binds to the DNA sequence 5'-GVGGARAYRTRATTCCRC-3'. The sequence is that of Activatory protein CHA4 (CHA4) from Saccharomyces cerevisiae (strain ATCC 204508 / S288c) (Baker's yeast).